The primary structure comprises 258 residues: Ribonuclease HII (258 aa).

The 188-residue stretch at 71–258 (QLIAGIDEVG…PIKTMVNFKS (188 aa)) folds into the RNase H type-2 domain. 3 residues coordinate a divalent metal cation: Asp77, Glu78, and Asp169.

It belongs to the RNase HII family. It depends on Mn(2+) as a cofactor. The cofactor is Mg(2+).

It is found in the cytoplasm. The catalysed reaction is Endonucleolytic cleavage to 5'-phosphomonoester.. Endonuclease that specifically degrades the RNA of RNA-DNA hybrids. This Lactococcus lactis subsp. lactis (strain IL1403) (Streptococcus lactis) protein is Ribonuclease HII (rnhB).